The following is a 489-amino-acid chain: UDP-N-acetylmuramoyl-L-alanyl-D-glutamate--2,6-diaminopimelate ligase (489 aa).

Residue serine 32 coordinates UDP-N-acetyl-alpha-D-muramoyl-L-alanyl-D-glutamate. 113 to 119 (GTNGKTT) contributes to the ATP binding site. Residues 154–155 (TT), serine 181, glutamine 187, and arginine 189 each bind UDP-N-acetyl-alpha-D-muramoyl-L-alanyl-D-glutamate. Position 221 is an N6-carboxylysine (lysine 221). Meso-2,6-diaminopimelate contacts are provided by residues arginine 381, 405-408 (DNPR), glycine 456, and glutamate 460. The Meso-diaminopimelate recognition motif motif lies at 405–408 (DNPR).

Belongs to the MurCDEF family. MurE subfamily. Requires Mg(2+) as cofactor. Carboxylation is probably crucial for Mg(2+) binding and, consequently, for the gamma-phosphate positioning of ATP.

The protein localises to the cytoplasm. It catalyses the reaction UDP-N-acetyl-alpha-D-muramoyl-L-alanyl-D-glutamate + meso-2,6-diaminopimelate + ATP = UDP-N-acetyl-alpha-D-muramoyl-L-alanyl-gamma-D-glutamyl-meso-2,6-diaminopimelate + ADP + phosphate + H(+). Its pathway is cell wall biogenesis; peptidoglycan biosynthesis. Its function is as follows. Catalyzes the addition of meso-diaminopimelic acid to the nucleotide precursor UDP-N-acetylmuramoyl-L-alanyl-D-glutamate (UMAG) in the biosynthesis of bacterial cell-wall peptidoglycan. This chain is UDP-N-acetylmuramoyl-L-alanyl-D-glutamate--2,6-diaminopimelate ligase, found in Gloeobacter violaceus (strain ATCC 29082 / PCC 7421).